The sequence spans 570 residues: Peptidyl-prolyl cis-trans isomerase FKBP9 (570 aa).

Positions 1–24 (MAFRGWRPPPPPLLLLLLWVTGQA) are cleaved as a signal peptide. PPIase FKBP-type domains are found at residues 54-142 (GDFV…MDIW), 166-254 (SDFV…LDLH), 278-365 (GDFL…IDFH), and 389-477 (GDYL…LELV). Asn174, Asn286, Asn302, and Asn397 each carry an N-linked (GlcNAc...) asparagine glycan. 2 EF-hand domains span residues 488-523 (WNGEVSPNLFEEIDKDGNGEVLLEEFSEYIHAQVAS) and 533-568 (DAELIVKNMFTNQDRNGDGKVTAEEFKLKDQEAKHD). The Ca(2+) site is built by Asp501, Asp503, Asn505, Glu507, Glu512, Asp546, Asn548, Asp550, Lys552, and Glu557. A Prevents secretion from ER motif is present at residues 567–570 (HDEL).

Post-translationally, phosphorylated.

It is found in the endoplasmic reticulum. The catalysed reaction is [protein]-peptidylproline (omega=180) = [protein]-peptidylproline (omega=0). With respect to regulation, inhibited by FK506. In terms of biological role, PPIases accelerate the folding of proteins during protein synthesis. This is Peptidyl-prolyl cis-trans isomerase FKBP9 (FKBP9) from Homo sapiens (Human).